A 354-amino-acid chain; its full sequence is S-adenosylmethionine:tRNA ribosyltransferase-isomerase (354 aa).

The protein belongs to the QueA family. In terms of assembly, monomer.

The protein resides in the cytoplasm. The catalysed reaction is 7-aminomethyl-7-carbaguanosine(34) in tRNA + S-adenosyl-L-methionine = epoxyqueuosine(34) in tRNA + adenine + L-methionine + 2 H(+). The protein operates within tRNA modification; tRNA-queuosine biosynthesis. Functionally, transfers and isomerizes the ribose moiety from AdoMet to the 7-aminomethyl group of 7-deazaguanine (preQ1-tRNA) to give epoxyqueuosine (oQ-tRNA). This is S-adenosylmethionine:tRNA ribosyltransferase-isomerase from Pseudomonas fluorescens (strain ATCC BAA-477 / NRRL B-23932 / Pf-5).